The following is a 246-amino-acid chain: Large ribosomal subunit protein uL3 (246 aa).

2 disordered regions span residues 140–162 and 214–246; these read SHRS…NKKM and ADVP…EENA. An N5-methylglutamine modification is found at Gln151. The segment covering 234–246 has biased composition (low complexity); that stretch reads EAAPEAPASEENA.

This sequence belongs to the universal ribosomal protein uL3 family. In terms of assembly, part of the 50S ribosomal subunit. Forms a cluster with proteins L14 and L19. Post-translationally, methylated by PrmB.

One of the primary rRNA binding proteins, it binds directly near the 3'-end of the 23S rRNA, where it nucleates assembly of the 50S subunit. This is Large ribosomal subunit protein uL3 from Methylorubrum extorquens (strain CM4 / NCIMB 13688) (Methylobacterium extorquens).